Consider the following 323-residue polypeptide: Breast cancer metastasis-suppressor 1-like protein (323 aa).

The span at Met1–Glu17 shows a compositional bias: basic and acidic residues. The tract at residues Met1–Arg56 is disordered. Positions Met18–Asp53 are enriched in acidic residues. 2 coiled-coil regions span residues Glu52–Leu84 and Glu149–Glu180. Ser197 is modified (phosphoserine). Residues Lys240 and Lys246 each participate in a glycyl lysine isopeptide (Lys-Gly) (interchain with G-Cter in SUMO2) cross-link.

It belongs to the BRMS1 family. As to quaternary structure, component of the Sin3/HDAC1 corepressor complex at least composed of BRMS1, BRMS1L and ING2/ING1L. Interacts with HDAC and SIN3A.

Its subcellular location is the nucleus. Involved in the histone deacetylase (HDAC1)-dependent transcriptional repression activity. When overexpressed in lung cancer cell line that lacks p53/TP53 expression, inhibits cell growth. The chain is Breast cancer metastasis-suppressor 1-like protein (BRMS1L) from Bos taurus (Bovine).